The sequence spans 245 residues: 1-(5-phosphoribosyl)-5-[(5-phosphoribosylamino)methylideneamino] imidazole-4-carboxamide isomerase (245 aa).

Aspartate 8 acts as the Proton acceptor in catalysis. The active-site Proton donor is aspartate 129.

This sequence belongs to the HisA/HisF family.

The protein resides in the cytoplasm. The enzyme catalyses 1-(5-phospho-beta-D-ribosyl)-5-[(5-phospho-beta-D-ribosylamino)methylideneamino]imidazole-4-carboxamide = 5-[(5-phospho-1-deoxy-D-ribulos-1-ylimino)methylamino]-1-(5-phospho-beta-D-ribosyl)imidazole-4-carboxamide. It participates in amino-acid biosynthesis; L-histidine biosynthesis; L-histidine from 5-phospho-alpha-D-ribose 1-diphosphate: step 4/9. The chain is 1-(5-phosphoribosyl)-5-[(5-phosphoribosylamino)methylideneamino] imidazole-4-carboxamide isomerase from Pelobacter propionicus (strain DSM 2379 / NBRC 103807 / OttBd1).